Here is a 317-residue protein sequence, read N- to C-terminus: U5 small nuclear ribonucleoprotein TSSC4 (317 aa).

Residues 1–19 (MAETEAGLEVEEPTEDDTL) are compositionally biased toward acidic residues. The interval 1–78 (MAETEAGLEV…IPTTAVQPFH (78 aa)) is disordered. Residues 20 to 37 (PSDTVSLSDSDSDLSLPS) are compositionally biased toward low complexity. A phosphoserine mark is found at Ser-57, Ser-64, Ser-83, and Ser-92. The tract at residues 74–101 (VQPFHLRGMSSTFSQRSHSIFDCLESAA) is hom2; mediates interaction with the U5 snRNP complexes and required for spliceosomal tri-snRNP complex assembly. Residues 123–151 (VAPPSQTPARSLSRVHGNTDPTRVHPVPD) are disordered. Positions 146–300 (VHPVPDYVSH…SKKRSRDHFR (155 aa)) are interaction with SNRNP200. The segment at 147 to 183 (HPVPDYVSHPERWTKYSLEDVSETSEQSNRDAALAFL) is hom3; mediates interaction with the U5 snRNP complexes. The hom4; necessary for interaction with the PRPF19 complex and required for spliceosomal tri-snRNP complex assembly stretch occupies residues 198-238 (FNQDPSSCGEGRVVFTKPVRGSEARAERKRVLKKGVVSGAG). An N6-acetyllysine modification is found at Lys-214. Positions 247-317 (HLAGPEAEEW…GPGSERGPSV (71 aa)) are disordered.

It belongs to the TSSC4 family. Interacts in a RNA-independent manner with distinct U5 snRNP-containing complexes, the mono-U5 snRNP and the post-splicing U5 snRNP-PRPF19 complex. Interacts with SNRNP200; the interaction is direct, excludes recruitment of C9ORF78 and WBP4 to SNRNP200 and negatively regulates its RNA helicase activity. Interacts with PRPF8; the interaction is direct.

The protein resides in the nucleus. It is found in the cytoplasm. Functionally, protein associated with the U5 snRNP, during its maturation and its post-splicing recycling and which is required for spliceosomal tri-snRNP complex assembly in the nucleus. Has a molecular sequestering activity and transiently hinders SNRNP200 binding sites for constitutive splicing factors that intervene later during the assembly of the spliceosome and splicing. Together with its molecular sequestering activity, may also function as a molecular adapter and placeholder, coordinating the assembly of the U5 snRNP and its association with the U4/U6 di-snRNP. This chain is U5 small nuclear ribonucleoprotein TSSC4, found in Rattus norvegicus (Rat).